A 408-amino-acid polypeptide reads, in one-letter code: Zinc chaperone AztD (408 aa).

The signal sequence occupies residues 1 to 21; the sequence is MLRHLAGASALALTLAGAGFA. Residues 23–29 carry the N-terminal Zn(2+)-binding motif; binds a third Zn(2+) with low affinity motif; that stretch reads DHDHDHE. Positions 99, 102, 104, 124, 167, 218, and 408 each coordinate Zn(2+). Residues C214 and C231 are joined by a disulfide bond.

As to quaternary structure, monomer.

The protein resides in the periplasm. In terms of biological role, acts as a zinc chaperone in the AztABCD zinc transport system. Directly transfers one zinc cation to the solute binding protein AztC; the transfer occurs without the formation of a stable interaction. Binds 3 Zn(2+), two with high affinity and one with low affinity, and transfers only Zn(2+) bound to site 2 to AztC. Likely functions to store zinc in the periplasm and may be important for zinc accumulation in zinc-limited environments. This chain is Zinc chaperone AztD, found in Paracoccus denitrificans (strain Pd 1222).